The primary structure comprises 311 residues: Chalcone synthase 4 (311 aa).

C164 is a catalytic residue.

It belongs to the thiolase-like superfamily. Chalcone/stilbene synthases family.

It catalyses the reaction (E)-4-coumaroyl-CoA + 3 malonyl-CoA + 3 H(+) = 2',4,4',6'-tetrahydroxychalcone + 3 CO2 + 4 CoA. Its pathway is secondary metabolite biosynthesis; flavonoid biosynthesis. The primary product of this enzyme is 4,2',4',6'-tetrahydroxychalcone (also termed naringenin-chalcone or chalcone) which can under specific conditions spontaneously isomerize into naringenin. This is Chalcone synthase 4 (CHS4) from Trifolium subterraneum (Subterranean clover).